A 325-amino-acid chain; its full sequence is Bifunctional nuclease 1 (325 aa).

Positions 117 to 252 (CVHNNPQGGH…YLAYSDGMRV (136 aa)) constitute a BFN domain. The UVR domain occupies 284 to 318 (TKEFNILSKMMQAVDEERYDEAAEWRDKLGQFRAK).

It belongs to the bifunctional nuclease family.

The protein resides in the nucleus. Functionally, bifunctional nuclease with both RNase and DNase activities. Involved in basal defense response. Participates in abscisic acid-derived callose deposition following infection by a necrotrophic pathogen. This Arabidopsis thaliana (Mouse-ear cress) protein is Bifunctional nuclease 1 (BBD1).